Here is a 486-residue protein sequence, read N- to C-terminus: 2-isopropylmalate synthase (486 aa).

The region spanning 4 to 266 is the Pyruvate carboxyltransferase domain; sequence VYIFDTTLRD…KTDVNLKEIA (263 aa). Residues D13, H201, H203, and N237 each contribute to the Mn(2+) site. Residues 390 to 486 are regulatory domain; sequence KVEIIHVTSG…LSTDIIEASA (97 aa).

The protein belongs to the alpha-IPM synthase/homocitrate synthase family. LeuA type 1 subfamily. Mn(2+) is required as a cofactor.

It is found in the cytoplasm. The enzyme catalyses 3-methyl-2-oxobutanoate + acetyl-CoA + H2O = (2S)-2-isopropylmalate + CoA + H(+). The protein operates within amino-acid biosynthesis; L-leucine biosynthesis; L-leucine from 3-methyl-2-oxobutanoate: step 1/4. Functionally, catalyzes the condensation of the acetyl group of acetyl-CoA with 3-methyl-2-oxobutanoate (2-ketoisovalerate) to form 3-carboxy-3-hydroxy-4-methylpentanoate (2-isopropylmalate). This chain is 2-isopropylmalate synthase, found in Pyrococcus abyssi (strain GE5 / Orsay).